A 180-amino-acid polypeptide reads, in one-letter code: NADH-ubiquinone oxidoreductase chain 5 (180 aa).

Residues 131 to 148 traverse the membrane as a helical segment; that stretch reads VYHYAFAMLLGSTPFVTF.

The protein belongs to the complex I subunit 5 family.

The protein resides in the mitochondrion inner membrane. The enzyme catalyses a ubiquinone + NADH + 5 H(+)(in) = a ubiquinol + NAD(+) + 4 H(+)(out). Its function is as follows. Core subunit of the mitochondrial membrane respiratory chain NADH dehydrogenase (Complex I) that is believed to belong to the minimal assembly required for catalysis. Complex I functions in the transfer of electrons from NADH to the respiratory chain. The immediate electron acceptor for the enzyme is believed to be ubiquinone. The polypeptide is NADH-ubiquinone oxidoreductase chain 5 (ND5) (Zea mays (Maize)).